The primary structure comprises 70 residues: Small ribosomal subunit protein bS21 (70 aa).

Belongs to the bacterial ribosomal protein bS21 family.

This is Small ribosomal subunit protein bS21 from Nitratidesulfovibrio vulgaris (strain ATCC 29579 / DSM 644 / CCUG 34227 / NCIMB 8303 / VKM B-1760 / Hildenborough) (Desulfovibrio vulgaris).